Reading from the N-terminus, the 420-residue chain is Homeobox-containing protein 1 (420 aa).

One can recognise an HNF-p1 domain in the interval Asp18–Thr49. The segment at Glu56–Ala139 is disordered. Residue Lys60 forms a Glycyl lysine isopeptide (Lys-Gly) (interchain with G-Cter in SUMO2) linkage. 2 stretches are compositionally biased toward low complexity: residues Arg64–Gly73 and Ala81–Gln93. Residues His94–Met132 show a composition bias toward polar residues. Lys131 is covalently cross-linked (Glycyl lysine isopeptide (Lys-Gly) (interchain with G-Cter in SUMO2)). The POU-specific atypical domain maps to Arg145–Ala241. Phosphoserine is present on Ser148. Lys161 is covalently cross-linked (Glycyl lysine isopeptide (Lys-Gly) (interchain with G-Cter in SUMO2)). Phosphoserine is present on Ser170. Glycyl lysine isopeptide (Lys-Gly) (interchain with G-Cter in SUMO2) cross-links involve residues Lys174, Lys217, and Lys310. A DNA-binding region (homeobox) is located at residues Arg267–Ala341. A disordered region spans residues Ile353–Gln385. The span at Asp365–Asp377 shows a compositional bias: acidic residues. Residue Lys413 forms a Glycyl lysine isopeptide (Lys-Gly) (interchain with G-Cter in SUMO1); alternate linkage. Lys413 participates in a covalent cross-link: Glycyl lysine isopeptide (Lys-Gly) (interchain with G-Cter in SUMO2); alternate.

In terms of assembly, associates with the telomerase holoenzyme complex. Interacts with DKC1, XRCC6 and COIL. As to expression, ubiquitous. Detected in pancreas, brain, spleen, placenta, prostate, thymus, liver, heart, bone marrow, skeletal muscle, stomach, uterus, testis, kidney, ovary, colon, lung, cardiac muscle and thyroid gland.

It is found in the nucleus. It localises to the cytoplasm. The protein localises to the chromosome. The protein resides in the telomere. Its subcellular location is the cajal body. It is found in the PML body. Its function is as follows. Binds directly to 5'-TTAGGG-3' repeats in telomeric DNA. Associates with the telomerase complex at sites of active telomere processing and positively regulates telomere elongation. Important for TERT binding to chromatin, indicating a role in recruitment of the telomerase complex to telomeres. Also plays a role in the alternative lengthening of telomeres (ALT) pathway in telomerase-negative cells where it promotes formation and/or maintenance of ALT-associated promyelocytic leukemia bodies (APBs). Enhances formation of telomere C-circles in ALT cells, suggesting a possible role in telomere recombination. Might also be involved in the DNA damage response at telomeres. The chain is Homeobox-containing protein 1 from Homo sapiens (Human).